Here is a 467-residue protein sequence, read N- to C-terminus: Asparagine--tRNA ligase (467 aa).

It belongs to the class-II aminoacyl-tRNA synthetase family. As to quaternary structure, homodimer.

It is found in the cytoplasm. It carries out the reaction tRNA(Asn) + L-asparagine + ATP = L-asparaginyl-tRNA(Asn) + AMP + diphosphate + H(+). The sequence is that of Asparagine--tRNA ligase from Pasteurella multocida (strain Pm70).